The chain runs to 362 residues: Vignain (362 aa).

The N-terminal stretch at 1–20 is a signal peptide; sequence MATKKLLWVVLSFSLVLGVA. Residues 21–131 constitute a propeptide, activation peptide; the sequence is NSFDFHDKDL…YEKVVSVPPS (111 aa). Disulfide bonds link C149–C191, C183–C224, and C282–C334. C152 is a catalytic residue. Residues H288 and N309 contribute to the active site. N326 and N346 each carry an N-linked (GlcNAc...) asparagine glycan. The Prevents secretion from ER signature appears at 359–362; it reads KDEL.

This sequence belongs to the peptidase C1 family. As to quaternary structure, monomer.

The protein localises to the endoplasmic reticulum lumen. Its function is as follows. Thought to be involved in the hydrolysis of stored seed proteins. This chain is Vignain, found in Phaseolus vulgaris (Kidney bean).